The following is a 367-amino-acid chain: Histidinol-phosphate aminotransferase (367 aa).

Lysine 226 carries the post-translational modification N6-(pyridoxal phosphate)lysine.

This sequence belongs to the class-II pyridoxal-phosphate-dependent aminotransferase family. Histidinol-phosphate aminotransferase subfamily. Homodimer. Pyridoxal 5'-phosphate serves as cofactor.

The enzyme catalyses L-histidinol phosphate + 2-oxoglutarate = 3-(imidazol-4-yl)-2-oxopropyl phosphate + L-glutamate. It participates in amino-acid biosynthesis; L-histidine biosynthesis; L-histidine from 5-phospho-alpha-D-ribose 1-diphosphate: step 7/9. The sequence is that of Histidinol-phosphate aminotransferase from Wolinella succinogenes (strain ATCC 29543 / DSM 1740 / CCUG 13145 / JCM 31913 / LMG 7466 / NCTC 11488 / FDC 602W) (Vibrio succinogenes).